Consider the following 300-residue polypeptide: Ribosomal protein L11 methyltransferase (300 aa).

Residues threonine 152, glycine 173, aspartate 195, and asparagine 234 each contribute to the S-adenosyl-L-methionine site.

This sequence belongs to the methyltransferase superfamily. PrmA family.

It is found in the cytoplasm. It carries out the reaction L-lysyl-[protein] + 3 S-adenosyl-L-methionine = N(6),N(6),N(6)-trimethyl-L-lysyl-[protein] + 3 S-adenosyl-L-homocysteine + 3 H(+). In terms of biological role, methylates ribosomal protein L11. The polypeptide is Ribosomal protein L11 methyltransferase (Paraburkholderia xenovorans (strain LB400)).